The chain runs to 275 residues: Anthracycline biosynthesis protein DnrV (275 aa).

2 consecutive VOC domains span residues 8-136 and 150-263; these read APAW…VWRK and SVGW…VVEL.

It participates in antibiotic biosynthesis; daunorubicin biosynthesis. It functions in the pathway antibiotic biosynthesis; carminomycin biosynthesis. In terms of biological role, involved in the biosynthesis of the anthracyclines carminomycin and daunorubicin (daunomycin) which are aromatic polyketide antibiotics that exhibit high cytotoxicity and are widely applied in the chemotherapy of a variety of cancers. In vivo, it acts jointly with DoxA in the conversion of 13-deoxycarminomycin and 13-deoxydaunorubicin to yield carminomycin and daunorubicin, respectively. In vitro, it also acts jointly with DoxA in the C-14 hydroxylation of daunorubicin to form doxorubicin, although this strain is not a doxorubicin producer. This chain is Anthracycline biosynthesis protein DnrV (dnrV), found in Streptomyces peucetius.